A 325-amino-acid polypeptide reads, in one-letter code: Electron transfer flavoprotein subunit alpha (325 aa).

262-290 lines the FAD pocket; the sequence is LYIACGISGAIQHLAGMSNSKVIVAINKD.

This sequence belongs to the ETF alpha-subunit/FixB family. Heterodimer of an alpha and a beta subunit. Requires FAD as cofactor.

Its function is as follows. The electron transfer flavoprotein serves as a specific electron acceptor for other dehydrogenases. It transfers the electrons to the main respiratory chain via ETF-ubiquinone oxidoreductase (ETF dehydrogenase). This chain is Electron transfer flavoprotein subunit alpha (etfA), found in Bacillus subtilis (strain 168).